The following is a 408-amino-acid chain: Subtilisin-like protease 6 (408 aa).

Residues 1–20 (MGFITKAIPIVLAALSTVDG) form the signal peptide. Positions 21 to 123 (AKILEAGPHA…RDTVVKATAI (103 aa)) are excised as a propeptide. Residues 36–119 (KYIVVMKQDV…DFIERDTVVK (84 aa)) form the Inhibitor I9 domain. The Peptidase S8 domain occupies 131-408 (SWGLARVGSK…GKLIYNGSGK (278 aa)). Residues Asp-163 and His-194 each act as charge relay system in the active site. Asn-248, Asn-260, and Asn-345 each carry an N-linked (GlcNAc...) asparagine glycan. The active-site Charge relay system is the Ser-354. Asn-404 carries N-linked (GlcNAc...) asparagine glycosylation.

It belongs to the peptidase S8 family.

It is found in the secreted. In terms of biological role, secreted subtilisin-like serine protease with keratinolytic activity that contributes to pathogenicity. In Arthroderma gypseum (strain ATCC MYA-4604 / CBS 118893) (Microsporum gypseum), this protein is Subtilisin-like protease 6 (SUB6).